An 83-amino-acid chain; its full sequence is Cytochrome b559 subunit alpha (83 aa).

The helical transmembrane segment at 21–35 (VIHSITVPSLFIAGW) threads the bilayer. A heme-binding site is contributed by histidine 23.

It belongs to the PsbE/PsbF family. As to quaternary structure, heterodimer of an alpha subunit and a beta subunit. PSII is composed of 1 copy each of membrane proteins PsbA, PsbB, PsbC, PsbD, PsbE, PsbF, PsbH, PsbI, PsbJ, PsbK, PsbL, PsbM, PsbT, PsbX, PsbY, PsbZ, Psb30/Ycf12, at least 3 peripheral proteins of the oxygen-evolving complex and a large number of cofactors. It forms dimeric complexes. The cofactor is heme b.

Its subcellular location is the plastid. The protein resides in the chloroplast thylakoid membrane. Its function is as follows. This b-type cytochrome is tightly associated with the reaction center of photosystem II (PSII). PSII is a light-driven water:plastoquinone oxidoreductase that uses light energy to abstract electrons from H(2)O, generating O(2) and a proton gradient subsequently used for ATP formation. It consists of a core antenna complex that captures photons, and an electron transfer chain that converts photonic excitation into a charge separation. This is Cytochrome b559 subunit alpha from Oltmannsiellopsis viridis (Marine flagellate).